The sequence spans 412 residues: Double C2-like domain-containing protein beta (412 aa).

The interval 1–36 (MTLRRRGEKATISIQEHMAIDVCPGPIRPIKQISDY) is negatively regulates targeting to plasma membrane. Residues 1–90 (MTLRRRGEKA…EDVDQLFGAY (90 aa)) are mediates interaction with DYNLT1. The segment at 38-123 (PRFPRGLPPT…PDADGYESDD (86 aa)) is disordered. Positions 49–73 (APRASAPPDAPARSPAATAGPRSPS) are enriched in low complexity. A compositionally biased stretch (pro residues) spans 95–108 (GPSPGPSPVRPPAK). A compositionally biased stretch (acidic residues) spans 112–123 (DEPDADGYESDD). 2 consecutive C2 domains span residues 126–250 (ALGT…SICL) and 266–399 (ERGR…ERWH). Ca(2+) is bound by residues D157, D163, D218, D220, D297, D303, D357, D359, and D365. Residues 257–375 (DKAEDKSLEE…FIGGVVLGIN (119 aa)) form a mediates interaction with STXBP3 region. S411 is subject to Phosphoserine.

Interacts with STX4; the interaction is calcium-dependent, increased by insulin and glucose, and mediates vesicle fusion with plasma membrane in pancreatic cells and adipocytes. Interacts with STXBP3; the interaction is direct, occurs at the cell membrane and regulates glucose-stimulated insulin secretion. Interacts with cytoplasmic dynein light chain DYNLT1. Interacts with the SNARE (soluble N-ethylmaleimide-sensitive factor attached protein receptor) complex composed of SNAP25, STX1A and VAMP2; the interaction is calcium-dependent and competitive with SYT1. May interact with UNC13A; the interaction mediates targeting to the plasma membrane. The cofactor is Ca(2+). As to expression, expressed in brain; highly enriched in neurons.

The protein localises to the cytoplasm. Its subcellular location is the cytoplasmic granule. It is found in the cell membrane. Its function is as follows. Calcium sensor which positively regulates SNARE-dependent fusion of vesicles with membranes. Binds phospholipids in a calcium-dependent manner and may act at the priming stage of fusion by modifying membrane curvature to stimulate fusion. Involved in calcium-triggered exocytosis in chromaffin cells and calcium-dependent spontaneous release of neurotransmitter in absence of action potentials in neuronal cells. Involved both in glucose-stimulated insulin secretion in pancreatic cells and insulin-dependent GLUT4 transport to the plasma membrane in adipocytes. In Rattus norvegicus (Rat), this protein is Double C2-like domain-containing protein beta (Doc2b).